The following is a 504-amino-acid chain: Ribonuclease Y (504 aa).

Positions 194–279 constitute a KH domain; it reads TVHVVSLPND…EMVEKAKQEV (86 aa). Residues 320-413 form the HD domain; sequence VLKHSMEVAY…VQAADAISAA (94 aa).

The protein belongs to the RNase Y family.

Functionally, endoribonuclease that initiates mRNA decay. The polypeptide is Ribonuclease Y (Clostridium novyi (strain NT)).